Reading from the N-terminus, the 357-residue chain is Type II methyltransferase M1.HgaI (357 aa).

The region spanning 5 to 357 (IMGLSLFSSA…NITREIFNEN (353 aa)) is the SAM-dependent MTase C5-type domain. Cys-83 is a catalytic residue.

This sequence belongs to the class I-like SAM-binding methyltransferase superfamily. C5-methyltransferase family.

The enzyme catalyses a 2'-deoxycytidine in DNA + S-adenosyl-L-methionine = a 5-methyl-2'-deoxycytidine in DNA + S-adenosyl-L-homocysteine + H(+). Its function is as follows. A methylase that recognizes DNA with the sequence 5'-GCGTC-3', methylates C-2, and protects the DNA from cleavage by the HgaI endonuclease. The polypeptide is Type II methyltransferase M1.HgaI (hgaIAM) (Avibacterium volantium (Pasteurella volantium)).